The chain runs to 582 residues: MSSSLGKEKDSKEKDPKVPSAKEREKESKASGGFGKESKEKEPKAKGKDAKDGKKESSAAQPGVAFSVDNTIKRPNPAPGTRKKSSNAEVIKELNKCREENSMRLDLSKRSIHILPPSVKELTQLTELYLYSNKLQSLPAEVGCLVNLMTLALSENSLTSLPDSLDNLKKLRMLDLRHNKLREIPSVVYRLDSLTTLYLRFNRITTVEKDIKNLPKLSMLSIRENKIKQLPAEIGELCNLITLDVAHNQLEHLPKEIGNCTQITNLDLQHNDLLDLPDTIGNLSSLNRLGLRYNRLSAIPRSLAKCSALEELNLENNNISTLPESLLSSLVKLNSLTLARNCFQLYPVGGPSQFSTIYSLNMEHNRINKIPFGIFSRAKVLSKLNMKDNQLTSLPLDFGTWTSMVELNLATNQLTKIPEDVSGLVSLEVLILSNNLLKKLPHGLGNLRKLRELDLEENKLESLPNEIAYLKDLQKLVLTNNQLSTLPRGIGHLTNLTHLGLGENLLTHLPEEIGTLENLEELYLNDNPNLHSLPFELALCSKLSIMSIENCPLSHLPPQIVAGGPSFIIQFLKMQGPYRAMV.

Composition is skewed to basic and acidic residues over residues 1-29 (MSSS…KESK) and 36-57 (KESK…KKES). A disordered region spans residues 1–88 (MSSSLGKEKD…PGTRKKSSNA (88 aa)). Positions 63–66 (GVAF) match the RVxF motif; important for interaction with PP1c motif. LRR repeat units follow at residues 101–122 (NSMR…VKEL), 124–145 (QLTE…VGCL), 147–169 (NLMT…DNLK), 170–191 (KLRM…VYRL), 193–215 (SLTT…KNLP), 216–237 (KLSM…IGEL), 239–260 (NLIT…IGNC), 262–283 (QITN…IGNL), 285–307 (SLNR…AKCS), 308–329 (ALEE…LLSS), 332–353 (KLNS…GPSQ), 356–377 (TIYS…IFSR), 380–400 (VLSK…DFGT), 403–424 (SMVE…VSGL), 426–448 (SLEV…GNLR), 449–470 (KLRE…IAYL), 472–494 (DLQK…GHLT), 495–516 (NLTH…IGTL), 518–540 (NLEE…LALC), and 542–563 (KLSI…IVAG).

The protein belongs to the SHOC2 family. Component of the SHOC2-MRAS-PP1c (SMP) complex consisting of SHOC2, GTP-bound M-Ras/MRAS and the catalytic subunit of protein phosphatase 1 (either PPP1CA, PPP1CB or PPP1CC). SHOC2 and PP1c preferably bind M-Ras/MRAS, but they also bind K-Ras/KRAS, N-Ras/NRAS and H-Ras/HRAS; these interactions are GTP-dependent and both SHOC2 and PP1c are required to form a stable complex. Interacts with PP1c in the absence of Ras GTPases. Interacts with M-Ras/MRAS and RAF1. Interacts with ERBIN; disrupts the interaction with RAF1 and Ras, preventing the activation of the Ras signaling pathway. Interacts with LZTR1.

It is found in the cytoplasm. The protein localises to the nucleus. Functionally, core component of the SHOC2-MRAS-PP1c (SMP) holophosphatase complex that regulates activation of the MAPK pathway. Acts as a scaffolding protein in the SMP complex. The SMP complex specifically dephosphorylates the inhibitory phosphorylation at 'Ser-259' of RAF1 kinase, 'Ser-365' of BRAF kinase and 'Ser-214' of ARAF kinase, stimulating their kinase activities. The SMP complex enhances the dephosphorylation activity and substrate specificity of PP1c. This Mus musculus (Mouse) protein is Leucine-rich repeat protein SHOC-2 (Shoc2).